Here is a 174-residue protein sequence, read N- to C-terminus: Methylated-DNA--protein-cysteine methyltransferase (174 aa).

C141 acts as the Nucleophile; methyl group acceptor in catalysis.

It belongs to the MGMT family.

Its subcellular location is the cytoplasm. The catalysed reaction is a 6-O-methyl-2'-deoxyguanosine in DNA + L-cysteinyl-[protein] = S-methyl-L-cysteinyl-[protein] + a 2'-deoxyguanosine in DNA. It carries out the reaction a 4-O-methyl-thymidine in DNA + L-cysteinyl-[protein] = a thymidine in DNA + S-methyl-L-cysteinyl-[protein]. In terms of biological role, involved in the cellular defense against the biological effects of O6-methylguanine (O6-MeG) and O4-methylthymine (O4-MeT) in DNA. Repairs the methylated nucleobase in DNA by stoichiometrically transferring the methyl group to a cysteine residue in the enzyme. This is a suicide reaction: the enzyme is irreversibly inactivated. This Thermococcus gammatolerans (strain DSM 15229 / JCM 11827 / EJ3) protein is Methylated-DNA--protein-cysteine methyltransferase.